We begin with the raw amino-acid sequence, 670 residues long: DNA ligase (670 aa).

NAD(+) contacts are provided by residues 34–38, 83–84, and glutamate 113; these read DFEFD and SL. Catalysis depends on lysine 115, which acts as the N6-AMP-lysine intermediate. 4 residues coordinate NAD(+): arginine 136, glutamate 173, lysine 288, and lysine 312. Zn(2+) contacts are provided by cysteine 406, cysteine 409, cysteine 424, and cysteine 430. The region spanning 591–670 is the BRCT domain; that stretch reads PESDKFAGKS…EAEFISLLNS (80 aa).

It belongs to the NAD-dependent DNA ligase family. LigA subfamily. Mg(2+) is required as a cofactor. Requires Mn(2+) as cofactor.

It catalyses the reaction NAD(+) + (deoxyribonucleotide)n-3'-hydroxyl + 5'-phospho-(deoxyribonucleotide)m = (deoxyribonucleotide)n+m + AMP + beta-nicotinamide D-nucleotide.. DNA ligase that catalyzes the formation of phosphodiester linkages between 5'-phosphoryl and 3'-hydroxyl groups in double-stranded DNA using NAD as a coenzyme and as the energy source for the reaction. It is essential for DNA replication and repair of damaged DNA. This is DNA ligase from Cytophaga hutchinsonii (strain ATCC 33406 / DSM 1761 / CIP 103989 / NBRC 15051 / NCIMB 9469 / D465).